Consider the following 211-residue polypeptide: Lipoprotein signal peptidase (211 aa).

Transmembrane regions (helical) follow at residues leucine 12–valine 32, alanine 96–tyrosine 116, and leucine 127–alanine 147. Catalysis depends on residues aspartate 153 and aspartate 174. Residues tryptophan 167–histidine 187 traverse the membrane as a helical segment.

This sequence belongs to the peptidase A8 family.

Its subcellular location is the cell inner membrane. The enzyme catalyses Release of signal peptides from bacterial membrane prolipoproteins. Hydrolyzes -Xaa-Yaa-Zaa-|-(S,diacylglyceryl)Cys-, in which Xaa is hydrophobic (preferably Leu), and Yaa (Ala or Ser) and Zaa (Gly or Ala) have small, neutral side chains.. It participates in protein modification; lipoprotein biosynthesis (signal peptide cleavage). Its function is as follows. This protein specifically catalyzes the removal of signal peptides from prolipoproteins. The polypeptide is Lipoprotein signal peptidase (Anaeromyxobacter sp. (strain Fw109-5)).